The primary structure comprises 200 residues: Casparian strip membrane protein 1 (200 aa).

The Cytoplasmic segment spans residues 1–38 (MSTTIEIPAESSAVAKGKAPLIGASSSSYEKKGGYKKG). A helical membrane pass occupies residues 39–59 (IAIFDFILRLGAVISALSAAA). The Extracellular portion of the chain corresponds to 60 to 88 (TMGTSDETLPFFTQFFQFEAGYDDFPTFQ). Residues 89 to 109 (FFVIAMGFVGGYLVLSLPFSV) traverse the membrane as a helical segment. The Cytoplasmic segment spans residues 110–121 (VAIIRPHAVGIR). Residues 122 to 142 (LLLLILDTVALTLNTAAAAAA) traverse the membrane as a helical segment. The Extracellular segment spans residues 143-175 (AAIVYLAHNGNQSANWLAVCQQFGDFCQKVSGG). Residue Asn153 is glycosylated (N-linked (GlcNAc...) asparagine). Residues 176–196 (VVASFVSVLVFLLLVVMSAVA) form a helical membrane-spanning segment. At 197–200 (LRKH) the chain is on the cytoplasmic side.

This sequence belongs to the Casparian strip membrane proteins (CASP) family. Homodimer and heterodimers.

It is found in the cell membrane. Regulates membrane-cell wall junctions and localized cell wall deposition. Required for establishment of the Casparian strip membrane domain (CSD) and the subsequent formation of Casparian strips, a cell wall modification of the root endodermis that determines an apoplastic barrier between the intraorganismal apoplasm and the extraorganismal apoplasm and prevents lateral diffusion. This is Casparian strip membrane protein 1 from Ricinus communis (Castor bean).